We begin with the raw amino-acid sequence, 473 residues long: Serine palmitoyltransferase 1 (473 aa).

The Lumenal segment spans residues 1-15; the sequence is MATVAEQWVLVEMVQ. Positions 1–66 are interaction with SPTLC2; it reads MATVAEQWVL…KEELIEEWQP (66 aa). Residues 16-36 form a helical membrane-spanning segment; the sequence is ALYEAPAYHLILEGILILWII. Residues 37–473 are Cytoplasmic-facing; it reads RLVFSKTYKL…IREAAQAVLL (437 aa). At tyrosine 164 the chain carries Phosphotyrosine; by ABL.

This sequence belongs to the class-II pyridoxal-phosphate-dependent aminotransferase family. As to quaternary structure, component of the serine palmitoyltransferase (SPT) complex, which is also composed of SPTLC2 or SPTLC3 and SPTSSA or SPTSSB. The heterodimer with SPTLC2 or SPTLC3 forms the catalytic core of the enzyme, while SPTSSA or SPTSSB subunits determine substrate specificity. SPT also interacts with ORMDL proteins, especially ORMDL3, which negatively regulate SPT activity in the presence of ceramides. Forms dimers of heterodimers with SPTLC2. Interacts with RTN4 (isoform B). Pyridoxal 5'-phosphate is required as a cofactor. Phosphorylation at Tyr-164 inhibits activity and promotes cell survival. In terms of tissue distribution, expressed in a variety of tissues. Highest expression in brain, kidney and liver. Expressed in brown and white adipose tissues.

It is found in the endoplasmic reticulum membrane. The enzyme catalyses L-serine + hexadecanoyl-CoA + H(+) = 3-oxosphinganine + CO2 + CoA. The catalysed reaction is octadecanoyl-CoA + L-serine + H(+) = 3-oxoeicosasphinganine + CO2 + CoA. It catalyses the reaction tetradecanoyl-CoA + L-serine + H(+) = 3-oxohexadecasphinganine + CO2 + CoA. It carries out the reaction dodecanoyl-CoA + L-serine + H(+) = 3-oxotetradecasphinganine + CO2 + CoA. It functions in the pathway lipid metabolism; sphingolipid metabolism. Its activity is regulated as follows. SPT complex catalytic activity is negatively regulated by ORMDL proteins, including ORMDL3, in the presence of ceramides. This mechanism allows to maintain ceramide levels at sufficient concentrations for the production of complex sphingolipids, but which prevents the accumulation of ceramides to levels that trigger apoptosis. Component of the serine palmitoyltransferase multisubunit enzyme (SPT) that catalyzes the initial and rate-limiting step in sphingolipid biosynthesis by condensing L-serine and activated acyl-CoA (most commonly palmitoyl-CoA) to form long-chain bases. The SPT complex is also composed of SPTLC2 or SPTLC3 and SPTSSA or SPTSSB. Within this complex, the heterodimer with SPTLC2 or SPTLC3 forms the catalytic core. The composition of the serine palmitoyltransferase (SPT) complex determines the substrate preference. The SPTLC1-SPTLC2-SPTSSA complex shows a strong preference for C16-CoA substrate, while the SPTLC1-SPTLC3-SPTSSA isozyme uses both C14-CoA and C16-CoA as substrates, with a slight preference for C14-CoA. The SPTLC1-SPTLC2-SPTSSB complex shows a strong preference for C18-CoA substrate, while the SPTLC1-SPTLC3-SPTSSB isozyme displays an ability to use a broader range of acyl-CoAs, without apparent preference. Required for adipocyte cell viability and metabolic homeostasis. The protein is Serine palmitoyltransferase 1 (Sptlc1) of Mus musculus (Mouse).